The following is a 282-amino-acid chain: MKKLSVIFLSVSMLSGIAFADKDKVVATYKGGEVKESQIMKEFKPQLNLQSGETIKNFDDFPPQDQEKLIKIYVNNLLLKEEVAKSNITSSKEFQEKLENAKNQLAQQELLANYIKSNITDKMFDDEYNKYVGNLKGKEQIKVAHILVKSQKEANDIKTKLSKGGNFTKLAEELSLDKASASNGGVIGYILLNQPGQLVPEFEKKAFALKVNEVSTPVKTDFGWHIIKVLEKKPVPIPTKEEAKVTIDNILAAEVLKKYIADLEAKANLKIMLPKADSKAGS.

The N-terminal stretch at 1 to 20 (MKKLSVIFLSVSMLSGIAFA) is a signal peptide. The 94-residue stretch at 138-231 (KEQIKVAHIL…FGWHIIKVLE (94 aa)) folds into the PpiC domain.

The protein belongs to the PpiC/parvulin rotamase family.

It is found in the cell outer membrane. It catalyses the reaction [protein]-peptidylproline (omega=180) = [protein]-peptidylproline (omega=0). The polypeptide is Parvulin-like PPIase (plp) (Rickettsia conorii (strain ATCC VR-613 / Malish 7)).